A 454-amino-acid chain; its full sequence is MLAENLVEEFEMKEDEPWYDHQDLQQDLQLAAELGKTLLDRNTELEDSVQQMYTTNQEQLQEIEYLTKQVELLRQMNEQHAKVYEQLDVTARELEETNQKLVADSKASQQKILSLTETIECLQTNIDHLQSQVEELKSSGQGRRSPGKCDQEKPAPSFACLKELYDLRQHFVYDHVFAEKITSLQGQPSPDEEENEHLKKTVTMLQAQLSLERQKRVTMEEEYGLVLKENSELEQQLGATGAYRARALELEAEVAEMRQMLQSEHPFVNGVEKLVPDSLYVPFKEPSQSLLEEMFLTVPESHRKPLKRSSSETILSSLAGSDIVKGHEETCIRRAKAVKQRGISLLHEVDTQYSALKVKYEELLKKCQEEQDSLSHKAVQTSRAAAKDLTGVNAQSEPVASGWELASVNPEPVSSPTTPPEYKALFKEIFSCIKKTKQEIDEQRTKYRSLSSHS.

2 coiled-coil regions span residues 44–142 (ELED…SGQG) and 192–265 (EEEN…QSEH). The tract at residues 134 to 153 (EELKSSGQGRRSPGKCDQEK) is disordered. Ser-311 is subject to Phosphoserine. Positions 346 to 380 (LHEVDTQYSALKVKYEELLKKCQEEQDSLSHKAVQ) form a coiled coil.

It belongs to the CDR2 family.

This is Cerebellar degeneration-related protein 2 (CDR2) from Homo sapiens (Human).